The following is a 55-amino-acid chain: Large ribosomal subunit protein bL33 (55 aa).

This sequence belongs to the bacterial ribosomal protein bL33 family.

The sequence is that of Large ribosomal subunit protein bL33 from Acidiphilium cryptum (strain JF-5).